A 197-amino-acid chain; its full sequence is Holliday junction branch migration complex subunit RuvA (197 aa).

The interval 1–64 (MIGRLRGIVA…EDSVSLYGFL (64 aa)) is domain I. A domain II region spans residues 65-143 (REGERRLFRD…QFGAGGALPT (79 aa)). The interval 144 to 153 (GSGPAPADPL) is flexible linker. A domain III region spans residues 153–197 (LSDATVALQQLGYKPAEAARMARDAFNEGDEVATVIRKALQSALR).

This sequence belongs to the RuvA family. As to quaternary structure, homotetramer. Forms an RuvA(8)-RuvB(12)-Holliday junction (HJ) complex. HJ DNA is sandwiched between 2 RuvA tetramers; dsDNA enters through RuvA and exits via RuvB. An RuvB hexamer assembles on each DNA strand where it exits the tetramer. Each RuvB hexamer is contacted by two RuvA subunits (via domain III) on 2 adjacent RuvB subunits; this complex drives branch migration. In the full resolvosome a probable DNA-RuvA(4)-RuvB(12)-RuvC(2) complex forms which resolves the HJ.

It is found in the cytoplasm. Its function is as follows. The RuvA-RuvB-RuvC complex processes Holliday junction (HJ) DNA during genetic recombination and DNA repair, while the RuvA-RuvB complex plays an important role in the rescue of blocked DNA replication forks via replication fork reversal (RFR). RuvA specifically binds to HJ cruciform DNA, conferring on it an open structure. The RuvB hexamer acts as an ATP-dependent pump, pulling dsDNA into and through the RuvAB complex. HJ branch migration allows RuvC to scan DNA until it finds its consensus sequence, where it cleaves and resolves the cruciform DNA. This Stenotrophomonas maltophilia (strain K279a) protein is Holliday junction branch migration complex subunit RuvA.